Reading from the N-terminus, the 203-residue chain is Histidine biosynthesis bifunctional protein HisIE (203 aa).

The segment at 1–108 (MELDFDKMNG…GEKNEEPVMF (108 aa)) is phosphoribosyl-AMP cyclohydrolase. The tract at residues 109–203 (LKALQDFIDK…ERHSSTWKKH (95 aa)) is phosphoribosyl-ATP pyrophosphohydrolase.

This sequence in the N-terminal section; belongs to the PRA-CH family. In the C-terminal section; belongs to the PRA-PH family.

The protein localises to the cytoplasm. The catalysed reaction is 1-(5-phospho-beta-D-ribosyl)-ATP + H2O = 1-(5-phospho-beta-D-ribosyl)-5'-AMP + diphosphate + H(+). It catalyses the reaction 1-(5-phospho-beta-D-ribosyl)-5'-AMP + H2O = 1-(5-phospho-beta-D-ribosyl)-5-[(5-phospho-beta-D-ribosylamino)methylideneamino]imidazole-4-carboxamide. The protein operates within amino-acid biosynthesis; L-histidine biosynthesis; L-histidine from 5-phospho-alpha-D-ribose 1-diphosphate: step 2/9. Its pathway is amino-acid biosynthesis; L-histidine biosynthesis; L-histidine from 5-phospho-alpha-D-ribose 1-diphosphate: step 3/9. The sequence is that of Histidine biosynthesis bifunctional protein HisIE from Bacteroides thetaiotaomicron (strain ATCC 29148 / DSM 2079 / JCM 5827 / CCUG 10774 / NCTC 10582 / VPI-5482 / E50).